Consider the following 96-residue polypeptide: Large ribosomal subunit protein eL43 (96 aa).

The C4-type zinc-finger motif lies at 41-62 (CPVCGFMKLKRISTSIWECKKC).

This sequence belongs to the eukaryotic ribosomal protein eL43 family. Zn(2+) serves as cofactor.

This Methanococcus aeolicus (strain ATCC BAA-1280 / DSM 17508 / OCM 812 / Nankai-3) protein is Large ribosomal subunit protein eL43.